Reading from the N-terminus, the 102-residue chain is Vacuolar ATPase assembly integral membrane protein VMA21 (102 aa).

Topologically, residues M1–T30 are cytoplasmic. The helical transmembrane segment at L31–A51 threads the bilayer. Residues Y52–Y66 lie on the Lumenal side of the membrane. A helical transmembrane segment spans residues F67–V87. Over A88–D102 the chain is Cytoplasmic.

Belongs to the VMA21 family. As to quaternary structure, associates with the V0 complex of the vacuolar ATPase (V-ATPase). Interacts with ATP6AP2.

The protein localises to the endoplasmic reticulum membrane. The protein resides in the endoplasmic reticulum-Golgi intermediate compartment membrane. It is found in the cytoplasmic vesicle. Its subcellular location is the COPII-coated vesicle membrane. Required for the assembly of the V0 complex of the vacuolar ATPase (V-ATPase) in the endoplasmic reticulum. The polypeptide is Vacuolar ATPase assembly integral membrane protein VMA21 (Gallus gallus (Chicken)).